Reading from the N-terminus, the 359-residue chain is DNA replication and repair protein RecF (359 aa).

30-37 (GPNGSGKT) is an ATP binding site.

Belongs to the RecF family.

The protein localises to the cytoplasm. Functionally, the RecF protein is involved in DNA metabolism; it is required for DNA replication and normal SOS inducibility. RecF binds preferentially to single-stranded, linear DNA. It also seems to bind ATP. The protein is DNA replication and repair protein RecF of Psychromonas ingrahamii (strain DSM 17664 / CCUG 51855 / 37).